The chain runs to 940 residues: Translation initiation factor IF-2 (940 aa).

Disordered regions lie at residues 116–137, 151–196, 210–294, and 318–346; these read PEQEQLESTSVAEIPESVSSDT, EVEA…EQRS, AVRK…VKKV, and HSAPKSKKGGQNNNSSNSGSRPLIKVANR. Residues 121-137 show a composition bias toward polar residues; the sequence is LESTSVAEIPESVSSDT. Over residues 159-180 the composition is skewed to acidic residues; that stretch reads PEPEVEATPEPEVEDVVAEEAE. Low complexity predominate over residues 181-193; sequence PAAAEPAPAPVVE. Basic and acidic residues predominate over residues 213-239; sequence KKAEEEAEVARRKADAEKAEAAAKQKA. The segment covering 282 to 294 has biased composition (basic residues); it reads KHNKKAGKAVKKV. Residues 326 to 337 show a composition bias toward low complexity; it reads GGQNNNSSNSGS. Residues 441 to 610 form the tr-type G domain; the sequence is ARAPVVTVMG…ALQAELLELS (170 aa). Positions 450–457 are G1; the sequence is GHVDHGKT. A GTP-binding site is contributed by 450–457; the sequence is GHVDHGKT. The G2 stretch occupies residues 475–479; that stretch reads GITQH. Residues 496 to 499 are G3; that stretch reads DTPG. Residues 496-500 and 550-553 each bind GTP; these read DTPGH and NKID. Residues 550–553 form a G4 region; the sequence is NKID. Residues 586–588 are G5; the sequence is SAQ.

Belongs to the TRAFAC class translation factor GTPase superfamily. Classic translation factor GTPase family. IF-2 subfamily.

The protein localises to the cytoplasm. Functionally, one of the essential components for the initiation of protein synthesis. Protects formylmethionyl-tRNA from spontaneous hydrolysis and promotes its binding to the 30S ribosomal subunits. Also involved in the hydrolysis of GTP during the formation of the 70S ribosomal complex. This Teredinibacter turnerae (strain ATCC 39867 / T7901) protein is Translation initiation factor IF-2.